The chain runs to 104 residues: Large ribosomal subunit protein uL24 (104 aa).

Belongs to the universal ribosomal protein uL24 family. Part of the 50S ribosomal subunit.

In terms of biological role, one of two assembly initiator proteins, it binds directly to the 5'-end of the 23S rRNA, where it nucleates assembly of the 50S subunit. One of the proteins that surrounds the polypeptide exit tunnel on the outside of the subunit. The polypeptide is Large ribosomal subunit protein uL24 (Maricaulis maris (strain MCS10) (Caulobacter maris)).